Consider the following 279-residue polypeptide: NADPH-dependent 7-cyano-7-deazaguanine reductase (279 aa).

86–88 contributes to the substrate binding site; the sequence is IES. 88–89 is a binding site for NADPH; that stretch reads SK. The active-site Thioimide intermediate is C187. Residue D194 is the Proton donor of the active site. 226-227 is a substrate binding site; it reads HE. 255–256 lines the NADPH pocket; it reads RG.

The protein belongs to the GTP cyclohydrolase I family. QueF type 2 subfamily. Homodimer.

Its subcellular location is the cytoplasm. The catalysed reaction is 7-aminomethyl-7-carbaguanine + 2 NADP(+) = 7-cyano-7-deazaguanine + 2 NADPH + 3 H(+). It functions in the pathway tRNA modification; tRNA-queuosine biosynthesis. Catalyzes the NADPH-dependent reduction of 7-cyano-7-deazaguanine (preQ0) to 7-aminomethyl-7-deazaguanine (preQ1). This chain is NADPH-dependent 7-cyano-7-deazaguanine reductase, found in Haemophilus influenzae (strain PittGG).